The primary structure comprises 53 residues: EAEEAARLQAEAEEAARQQAEAEEAARLQAEAEEAARLQAEAEEAARLQAEAE.

6 consecutive repeat copies span residues 1–10 (EAEEAARLQA), 11–20 (EAEEAARQQA), 21–30 (EAEEAARLQA), 31–40 (EAEEAARLQA), 41–50 (EAEEAARLQA), and 51–53 (EAE). The 6 X 10 AA tandem repeats stretch occupies residues 1–53 (EAEEAARLQAEAEEAARQQAEAEEAARLQAEAEEAARLQAEAEEAARLQAEAE). The disordered stretch occupies residues 1–53 (EAEEAARLQAEAEEAARQQAEAEEAARLQAEAEEAARLQAEAEEAARLQAEAE).

It localises to the membrane. The chain is Membrane antigen containing repeating peptides from Leishmania major.